The chain runs to 432 residues: Alcohol acyltransferase 9 (432 aa).

Active-site proton acceptor residues include His-156 and Asp-379.

It belongs to the plant acyltransferase family.

It catalyses the reaction 2-(methylsulfanyl)acetyl-CoA + butan-1-ol = butyl 2-(methylsulfanyl)acetate + CoA. It carries out the reaction ethanol + acetyl-CoA = ethyl acetate + CoA. The enzyme catalyses butan-1-ol + acetyl-CoA = butyl acetate + CoA. The catalysed reaction is butan-1-ol + propanoyl-CoA = butyl propanoate + CoA. Functionally, involved in the biosynthesis of volatile esters which confer kiwifruit flavor. Alcohol acyl transferase that can use a wide range of alcohols as substrate to produce esters. Exhibits acetyl-CoA:alcohol O-acyltransferase activity. The chain is Alcohol acyltransferase 9 from Actinidia chinensis var. chinensis (Chinese soft-hair kiwi).